A 376-amino-acid chain; its full sequence is UDP-4-amino-4,6-dideoxy-N-acetyl-beta-L-altrosamine transaminase (376 aa).

Substrate is bound by residues tyrosine 4, 24 to 27 (EILT), alanine 54, and serine 176. Lysine 181 is subject to N6-(pyridoxal phosphate)lysine. Residues asparagine 226 and 311 to 314 (QVHY) each bind substrate.

This sequence belongs to the DegT/DnrJ/EryC1 family.

The catalysed reaction is UDP-4-amino-4,6-dideoxy-N-acetyl-beta-L-altrosamine + 2-oxoglutarate = UDP-2-acetamido-2,6-dideoxy-beta-L-arabino-hex-4-ulose + L-glutamate. Functionally, catalyzes the second step in the biosynthesis of pseudaminic acid, a sialic-acid-like sugar that is used to modify flagellin. Uses UDP-2-acetamido-2,6-dideoxy-beta-L-arabino-4-hexulose as substrate producing UDP-4-amino-4,6-dideoxy-beta-L-AltNAc. The polypeptide is UDP-4-amino-4,6-dideoxy-N-acetyl-beta-L-altrosamine transaminase (pseC) (Campylobacter jejuni subsp. jejuni serotype O:2 (strain ATCC 700819 / NCTC 11168)).